We begin with the raw amino-acid sequence, 56 residues long: Small ribosomal subunit protein uS14 (56 aa).

4 residues coordinate Zn(2+): cysteine 21, cysteine 24, cysteine 39, and cysteine 42.

This sequence belongs to the universal ribosomal protein uS14 family. It depends on Zn(2+) as a cofactor.

The protein is Small ribosomal subunit protein uS14 (RPS29) of Eremothecium gossypii (strain ATCC 10895 / CBS 109.51 / FGSC 9923 / NRRL Y-1056) (Yeast).